Reading from the N-terminus, the 279-residue chain is Large ribosomal subunit protein uL2 (279 aa).

The interval 224 to 279 (AMNPIDHPHGGGEGRTSGGRHPVTPWGKGTKGNRTRKSKASDKLIVRSRHAKKKGR) is disordered. Residues 269 to 279 (VRSRHAKKKGR) are compositionally biased toward basic residues.

It belongs to the universal ribosomal protein uL2 family. Part of the 50S ribosomal subunit. Forms a bridge to the 30S subunit in the 70S ribosome.

In terms of biological role, one of the primary rRNA binding proteins. Required for association of the 30S and 50S subunits to form the 70S ribosome, for tRNA binding and peptide bond formation. It has been suggested to have peptidyltransferase activity; this is somewhat controversial. Makes several contacts with the 16S rRNA in the 70S ribosome. This chain is Large ribosomal subunit protein uL2, found in Cereibacter sphaeroides (strain ATCC 17029 / ATH 2.4.9) (Rhodobacter sphaeroides).